A 305-amino-acid polypeptide reads, in one-letter code: Tyrosine recombinase XerC (305 aa).

The Core-binding (CB) domain maps to 1–84 (MNEVFESYLT…TLRGFYKYAL (84 aa)). Residues 105–299 (KLPVFMFPKQ…TAEQLQNLYK (195 aa)) form the Tyr recombinase domain. Active-site residues include R146, K170, H251, R254, and H277. Y286 serves as the catalytic O-(3'-phospho-DNA)-tyrosine intermediate.

It belongs to the 'phage' integrase family. XerC subfamily. Forms a cyclic heterotetrameric complex composed of two molecules of XerC and two molecules of XerD.

It localises to the cytoplasm. In terms of biological role, site-specific tyrosine recombinase, which acts by catalyzing the cutting and rejoining of the recombining DNA molecules. The XerC-XerD complex is essential to convert dimers of the bacterial chromosome into monomers to permit their segregation at cell division. It also contributes to the segregational stability of plasmids. This Treponema denticola (strain ATCC 35405 / DSM 14222 / CIP 103919 / JCM 8153 / KCTC 15104) protein is Tyrosine recombinase XerC.